An 804-amino-acid chain; its full sequence is Probable replication endonuclease from prophage-like region 1 (804 aa).

Active-site O-(5'-phospho-DNA)-tyrosine intermediate residues include Tyr498 and Tyr502.

Belongs to the phage GPA family.

Functionally, possible endonuclease which induces a single-strand cut and initiates DNA replication. This is Probable replication endonuclease from prophage-like region 1 from Salmonella typhi.